A 535-amino-acid polypeptide reads, in one-letter code: Zinc finger protein squeeze (535 aa).

Composition is skewed to low complexity over residues 70-97 (MVMEQQPHPDQQQQQHLHHPQQQQHPPQ) and 131-142 (SSASGSGSNGSS). The disordered stretch occupies residues 70–157 (MVMEQQPHPD…RRGDGDQAKP (88 aa)). Residues 145 to 156 (EESRRGDGDQAK) show a composition bias toward basic and acidic residues. 5 C2H2-type zinc fingers span residues 158–180 (YKCGSCSKSFANSSYLSQHTRIH), 186–208 (YRCEICQRKFTQLSHLQQHIRTH), 214–238 (YKCRHAGCPKAFSQLSNLQSHSRCH), 244–266 (FKCNSCYKCFSDEMTLLEHIPKH), and 275–297 (HICNLCGKSYTQETYLQKHLQKH). Threonine 395 carries the post-translational modification Phosphothreonine. Phosphoserine occurs at positions 399 and 401. Residues 417-475 (TPQHHLQQQQQQQQQQQAQQQQQAQHQPSPGPGNSAFTPLSATVAPPPHLQQHRGPPGS) are disordered. Low complexity predominate over residues 419–443 (QHHLQQQQQQQQQQQAQQQQQAQHQ). Serine 475 bears the Phosphoserine mark. Phosphotyrosine is present on residues tyrosine 479 and tyrosine 481.

It belongs to the krueppel C2H2-type zinc-finger protein family. In terms of assembly, interacts with nab; which acts as a coactivator. Interacts with ap. As to expression, largely restricted to subsets of cells in the CNS throughout embryonic and first instar larval (L1) development. Expressed in a population of lateral interneurons, primarily projecting axons in the anterior and posterior commissures. Overlaps with ap within the thoracic ap cluster. By stage 17, it is restricted to 2 neurons within the ap-cluster, with one neuron typically continuing to display higher levels of expression. Selectively expressed at higher levels within the FMRFa Tv neurons. Expressed in all leucokinergic cells.

Its subcellular location is the nucleus. Its function is as follows. Transcription factor involved in neuronal fate specification. First required in embryonic CNS development to define the number of cells that express apterous (ap) in the ap thoracic cluster of interneurons. Later on, it plays a central role in the combinatorial code of transcription factors that specifies the fate of the Tv neuron in the ap cluster by participating in the transcription regulation of FMRFa in Tv cells. Also required for projection neuron dendritic targeting. This is Zinc finger protein squeeze (sqz) from Drosophila melanogaster (Fruit fly).